A 424-amino-acid chain; its full sequence is UDP-N-acetylglucosamine 1-carboxyvinyltransferase (424 aa).

22-23 is a binding site for phosphoenolpyruvate; the sequence is KN. A UDP-N-acetyl-alpha-D-glucosamine-binding site is contributed by Arg93. Catalysis depends on Cys117, which acts as the Proton donor. Position 117 is a 2-(S-cysteinyl)pyruvic acid O-phosphothioketal (Cys117). UDP-N-acetyl-alpha-D-glucosamine contacts are provided by residues 122–126, Asp307, and Val329; that span reads RPIDL.

The protein belongs to the EPSP synthase family. MurA subfamily.

The protein resides in the cytoplasm. It catalyses the reaction phosphoenolpyruvate + UDP-N-acetyl-alpha-D-glucosamine = UDP-N-acetyl-3-O-(1-carboxyvinyl)-alpha-D-glucosamine + phosphate. It functions in the pathway cell wall biogenesis; peptidoglycan biosynthesis. Cell wall formation. Adds enolpyruvyl to UDP-N-acetylglucosamine. The polypeptide is UDP-N-acetylglucosamine 1-carboxyvinyltransferase (Chlorobium limicola (strain DSM 245 / NBRC 103803 / 6330)).